A 65-amino-acid chain; its full sequence is Large ribosomal subunit protein bL35 (65 aa).

The disordered stretch occupies residues 1 to 22 (MPKIKTLRSAAKRFKKTASGKF). The span at 10 to 22 (AAKRFKKTASGKF) shows a compositional bias: basic residues.

This sequence belongs to the bacterial ribosomal protein bL35 family.

The protein is Large ribosomal subunit protein bL35 of Buchnera aphidicola subsp. Schizaphis graminum (strain Sg).